Here is a 93-residue protein sequence, read N- to C-terminus: Small ribosomal subunit protein uS19 (93 aa).

It belongs to the universal ribosomal protein uS19 family.

Its function is as follows. Protein S19 forms a complex with S13 that binds strongly to the 16S ribosomal RNA. The chain is Small ribosomal subunit protein uS19 from Leuconostoc citreum (strain KM20).